The sequence spans 236 residues: CDP-diacylglycerol--glycerol-3-phosphate 3-phosphatidyltransferase (236 aa).

5 consecutive transmembrane segments (helical) span residues 39-59 (IFIA…GVLA), 66-86 (ISIS…TAVI), 120-140 (VLIA…VFIV), 163-183 (WLGK…CFVW), and 196-216 (GLFF…FSIW).

It belongs to the CDP-alcohol phosphatidyltransferase class-I family.

Its subcellular location is the cell membrane. It catalyses the reaction a CDP-1,2-diacyl-sn-glycerol + sn-glycerol 3-phosphate = a 1,2-diacyl-sn-glycero-3-phospho-(1'-sn-glycero-3'-phosphate) + CMP + H(+). It participates in phospholipid metabolism; phosphatidylglycerol biosynthesis; phosphatidylglycerol from CDP-diacylglycerol: step 1/2. This protein catalyzes the committed step to the synthesis of the acidic phospholipids. This Mycoplasma genitalium (strain ATCC 33530 / DSM 19775 / NCTC 10195 / G37) (Mycoplasmoides genitalium) protein is CDP-diacylglycerol--glycerol-3-phosphate 3-phosphatidyltransferase (pgsA).